The sequence spans 69 residues: MSVLTPLLLRGLTGSARRLPVPRAQVHSMPPEQKLGVLELAIGFTSCLVTFLLPAGWILSHLDSYKKRG.

Residues 1-25 (MSVLTPLLLRGLTGSARRLPVPRAQ) constitute a mitochondrion transit peptide. Residues 2-19 (SVLTPLLLRGLTGSARRL) carry the SIFI-degron motif. The Mitochondrial matrix segment spans residues 26-36 (VHSMPPEQKLG). The chain crosses the membrane as a helical span at residues 37–60 (VLELAIGFTSCLVTFLLPAGWILS). The Mitochondrial intermembrane segment spans residues 61–69 (HLDSYKKRG).

Belongs to the cytochrome c oxidase VIII family. In terms of assembly, component of the cytochrome c oxidase (complex IV, CIV), a multisubunit enzyme composed of 14 subunits. The complex is composed of a catalytic core of 3 subunits MT-CO1, MT-CO2 and MT-CO3, encoded in the mitochondrial DNA, and 11 supernumerary subunits COX4I, COX5A, COX5B, COX6A, COX6B, COX6C, COX7A, COX7B, COX7C, COX8 and NDUFA4, which are encoded in the nuclear genome. The complex exists as a monomer or a dimer and forms supercomplexes (SCs) in the inner mitochondrial membrane with NADH-ubiquinone oxidoreductase (complex I, CI) and ubiquinol-cytochrome c oxidoreductase (cytochrome b-c1 complex, complex III, CIII), resulting in different assemblies (supercomplex SCI(1)III(2)IV(1) and megacomplex MCI(2)III(2)IV(2)). In response to mitochondrial stress, the precursor protein is ubiquitinated by the SIFI complex in the cytoplasm before mitochondrial import, leading to its degradation. Within the SIFI complex, UBR4 initiates ubiquitin chain that are further elongated or branched by KCMF1.

It localises to the mitochondrion inner membrane. It participates in energy metabolism; oxidative phosphorylation. In terms of biological role, component of the cytochrome c oxidase, the last enzyme in the mitochondrial electron transport chain which drives oxidative phosphorylation. The respiratory chain contains 3 multisubunit complexes succinate dehydrogenase (complex II, CII), ubiquinol-cytochrome c oxidoreductase (cytochrome b-c1 complex, complex III, CIII) and cytochrome c oxidase (complex IV, CIV), that cooperate to transfer electrons derived from NADH and succinate to molecular oxygen, creating an electrochemical gradient over the inner membrane that drives transmembrane transport and the ATP synthase. Cytochrome c oxidase is the component of the respiratory chain that catalyzes the reduction of oxygen to water. Electrons originating from reduced cytochrome c in the intermembrane space (IMS) are transferred via the dinuclear copper A center (CU(A)) of subunit 2 and heme A of subunit 1 to the active site in subunit 1, a binuclear center (BNC) formed by heme A3 and copper B (CU(B)). The BNC reduces molecular oxygen to 2 water molecules using 4 electrons from cytochrome c in the IMS and 4 protons from the mitochondrial matrix. The protein is Cytochrome c oxidase subunit 8A, mitochondrial (COX8A) of Saimiri sciureus (Common squirrel monkey).